A 245-amino-acid chain; its full sequence is Large ribosomal subunit protein uL3 (245 aa).

Q151 is modified (N5-methylglutamine). The segment at 214 to 245 (KDAPQPGKYRLANSAAPQPAEADAASDTGAQA) is disordered. Residues 225–245 (ANSAAPQPAEADAASDTGAQA) are compositionally biased toward low complexity.

This sequence belongs to the universal ribosomal protein uL3 family. Part of the 50S ribosomal subunit. Forms a cluster with proteins L14 and L19. In terms of processing, methylated by PrmB.

Functionally, one of the primary rRNA binding proteins, it binds directly near the 3'-end of the 23S rRNA, where it nucleates assembly of the 50S subunit. The chain is Large ribosomal subunit protein uL3 from Methylocella silvestris (strain DSM 15510 / CIP 108128 / LMG 27833 / NCIMB 13906 / BL2).